The primary structure comprises 67 residues: Amphipathic peptide Tx348 (67 aa).

A signal peptide spans 1–23 (MKSQAFFLLFLVVLLLATTQSEA). Phe-33 carries the phenylalanine amide modification. Residues 37-67 (SMRNMDTMKYLYDPSLSAADLKTLQKLMENY) constitute a propeptide that is removed on maturation.

The protein belongs to the non-disulfide-bridged peptide (NDBP) superfamily. Short antimicrobial peptide (group 4) family. In terms of tissue distribution, expressed by the venom gland.

The protein resides in the secreted. The protein localises to the target cell membrane. Functionally, amphipathic peptide that has antibacterial activities. This Buthus israelis (Israeli scorpion) protein is Amphipathic peptide Tx348.